Reading from the N-terminus, the 80-residue chain is U-actitoxin-Avd3s (80 aa).

The first 14 residues, 1 to 14 (FLLCFFLVADVSYG), serve as a signal peptide directing secretion. In terms of domain architecture, BPTI/Kunitz inhibitor spans 19-69 (CLLPMDVGRCRARHPRYYYNSSSKRCEMFNYGGCRGNANNFITKKECEKVC). Cystine bridges form between cysteine 19-cysteine 69, cysteine 28-cysteine 52, and cysteine 44-cysteine 65. A propeptide spanning residues 74 to 80 (RDSPKEN) is cleaved from the precursor.

Belongs to the venom Kunitz-type family. Sea anemone type 2 potassium channel toxin subfamily.

It localises to the secreted. It is found in the nematocyst. In terms of biological role, serine protease inhibitor that inhibits both tissue and plasma kallikreins. Has hemolytic activity. Inhibits voltage-gated potassium channels (Kv). The chain is U-actitoxin-Avd3s from Anemonia viridis (Snakelocks anemone).